The primary structure comprises 71 residues: Disintegrin simusmin (71 aa).

The Disintegrin domain occupies 1–71; sequence AGEECDCGSP…SADCPRNPFH (71 aa). 6 disulfide bridges follow: Cys-5–Cys-20, Cys-7–Cys-15, Cys-14–Cys-37, Cys-28–Cys-34, Cys-33–Cys-58, and Cys-46–Cys-65. Positions 50–52 match the Cell attachment site motif; sequence RGD.

This sequence belongs to the venom metalloproteinase (M12B) family. P-II subfamily. P-IIa sub-subfamily. As to quaternary structure, monomer. In terms of tissue distribution, expressed by the venom gland.

The protein localises to the secreted. Functionally, inhibits ADP- (IC(50)=56 nM) and collagen-induced (IC(50)=49 nM) aggregation of human platelets. In vitro, inhibits adhesion of endothelial cells to vitronectin, type-I collagen and, to a lower degree, fibronectin and laminin. This Crotalus simus (Central American rattlesnake) protein is Disintegrin simusmin.